Consider the following 483-residue polypeptide: tRNA sulfurtransferase (483 aa).

Positions 61 to 165 (PLVADALTLI…NDRLLLITER (105 aa)) constitute a THUMP domain. ATP contacts are provided by residues 183–184 (LI), K265, G287, and Q296. Residues C344 and C457 are joined by a disulfide bond. Residues 405–483 (LGSGDVVLDI…GFQNVKVYRP (79 aa)) enclose the Rhodanese domain. Residue C457 is the Cysteine persulfide intermediate of the active site.

Belongs to the ThiI family.

The protein resides in the cytoplasm. It catalyses the reaction [ThiI sulfur-carrier protein]-S-sulfanyl-L-cysteine + a uridine in tRNA + 2 reduced [2Fe-2S]-[ferredoxin] + ATP + H(+) = [ThiI sulfur-carrier protein]-L-cysteine + a 4-thiouridine in tRNA + 2 oxidized [2Fe-2S]-[ferredoxin] + AMP + diphosphate. The catalysed reaction is [ThiS sulfur-carrier protein]-C-terminal Gly-Gly-AMP + S-sulfanyl-L-cysteinyl-[cysteine desulfurase] + AH2 = [ThiS sulfur-carrier protein]-C-terminal-Gly-aminoethanethioate + L-cysteinyl-[cysteine desulfurase] + A + AMP + 2 H(+). It participates in cofactor biosynthesis; thiamine diphosphate biosynthesis. Catalyzes the ATP-dependent transfer of a sulfur to tRNA to produce 4-thiouridine in position 8 of tRNAs, which functions as a near-UV photosensor. Also catalyzes the transfer of sulfur to the sulfur carrier protein ThiS, forming ThiS-thiocarboxylate. This is a step in the synthesis of thiazole, in the thiamine biosynthesis pathway. The sulfur is donated as persulfide by IscS. The chain is tRNA sulfurtransferase from Sodalis glossinidius (strain morsitans).